The chain runs to 386 residues: Hydrazine synthase subunit beta (386 aa).

The signal sequence occupies residues 1-34 (MVIRRKMNKMIRKGMIGAVMLGAAVAISGGVATA).

Part of the hydrazine synthase complex that forms an elongated dimer of heterotrimers composed of one alpha, one beta and one gamma subunit.

It localises to the anammoxosome. It participates in nitrogen metabolism. In terms of biological role, component of the hydrazine synthase complex that catalyzes the condensation of nitric oxide (NO) with ammonium to form hydrazine. The beta subunit may play a role in modulating transport of the hydroxylamine intermediate through a tunnel between the gamma and alpha subunit's active site. Is involved in anaerobic ammonium oxidation (anammox), a biological process in which nitrite is used as the electron acceptor in the conversion of ammonium to dinitrogen gas (N2) and water; this bacterial process has a major role in the Earth's nitrogen cycle and has been estimated to synthesize up to 50% of the dinitrogen gas emitted into our atmosphere from the oceans. The chain is Hydrazine synthase subunit beta from Kuenenia stuttgartiensis.